The chain runs to 275 residues: NH(3)-dependent NAD(+) synthetase (275 aa).

Residue 46-53 participates in ATP binding; that stretch reads GISGGQDS. D52 is a binding site for Mg(2+). R140 lines the deamido-NAD(+) pocket. ATP is bound at residue T160. E165 contributes to the Mg(2+) binding site. Deamido-NAD(+) contacts are provided by K173 and D180. ATP-binding residues include K189 and T211. Deamido-NAD(+) is bound at residue 260-261; the sequence is HK.

The protein belongs to the NAD synthetase family. Homodimer.

It catalyses the reaction deamido-NAD(+) + NH4(+) + ATP = AMP + diphosphate + NAD(+) + H(+). It participates in cofactor biosynthesis; NAD(+) biosynthesis; NAD(+) from deamido-NAD(+) (ammonia route): step 1/1. Functionally, catalyzes the ATP-dependent amidation of deamido-NAD to form NAD. Uses ammonia as a nitrogen source. The protein is NH(3)-dependent NAD(+) synthetase of Erwinia tasmaniensis (strain DSM 17950 / CFBP 7177 / CIP 109463 / NCPPB 4357 / Et1/99).